The sequence spans 457 residues: Serine--tRNA ligase (457 aa).

252–254 contributes to the L-serine binding site; it reads TAE. ATP contacts are provided by residues 283–285 and Val-299; that span reads RKE. Residue Glu-306 participates in L-serine binding. 370–373 contacts ATP; sequence EMVS. Residue Thr-406 participates in L-serine binding.

The protein belongs to the class-II aminoacyl-tRNA synthetase family. Type-1 seryl-tRNA synthetase subfamily. As to quaternary structure, homodimer. The tRNA molecule binds across the dimer.

Its subcellular location is the cytoplasm. The enzyme catalyses tRNA(Ser) + L-serine + ATP = L-seryl-tRNA(Ser) + AMP + diphosphate + H(+). It catalyses the reaction tRNA(Sec) + L-serine + ATP = L-seryl-tRNA(Sec) + AMP + diphosphate + H(+). The protein operates within aminoacyl-tRNA biosynthesis; selenocysteinyl-tRNA(Sec) biosynthesis; L-seryl-tRNA(Sec) from L-serine and tRNA(Sec): step 1/1. Functionally, catalyzes the attachment of serine to tRNA(Ser). Is also able to aminoacylate tRNA(Sec) with serine, to form the misacylated tRNA L-seryl-tRNA(Sec), which will be further converted into selenocysteinyl-tRNA(Sec). The chain is Serine--tRNA ligase from Saccharolobus islandicus (strain M.14.25 / Kamchatka #1) (Sulfolobus islandicus).